Consider the following 374-residue polypeptide: Alanine racemase (374 aa).

Catalysis depends on Lys-35, which acts as the Proton acceptor; specific for D-alanine. An N6-(pyridoxal phosphate)lysine modification is found at Lys-35. Substrate is bound at residue Arg-130. The active-site Proton acceptor; specific for L-alanine is Tyr-261. Met-309 provides a ligand contact to substrate.

Belongs to the alanine racemase family. Pyridoxal 5'-phosphate serves as cofactor.

The enzyme catalyses L-alanine = D-alanine. It participates in amino-acid biosynthesis; D-alanine biosynthesis; D-alanine from L-alanine: step 1/1. Catalyzes the interconversion of L-alanine and D-alanine. May also act on other amino acids. The chain is Alanine racemase (alr) from Albidiferax ferrireducens (strain ATCC BAA-621 / DSM 15236 / T118) (Rhodoferax ferrireducens).